A 643-amino-acid chain; its full sequence is COP9 signalosome complex subunit 10 (643 aa).

The segment covering 1-33 (MTDESDNYNDFMMSDEDMDSIEMEDEENDVEGD) has biased composition (acidic residues). Residues 1 to 37 (MTDESDNYNDFMMSDEDMDSIEMEDEENDVEGDEGQR) are disordered. In terms of domain architecture, PCI spans 331 to 517 (CKEEFWECLK…DTVTFYSEQH (187 aa)). Positions 573–584 (DSQSHSKSNTKS) are enriched in polar residues. The interval 573–594 (DSQSHSKSNTKSMSRHVSGHDP) is disordered.

In terms of assembly, component of a COP9 signalosome-like (CSN) complex.

Its subcellular location is the cytoplasm. It localises to the nucleus. Its function is as follows. Component of the COP9 signalosome (CSN) complex that acts as an regulator of the ubiquitin (Ubl) conjugation pathway by mediating the deneddylation of the cullin subunit of SCF-type E3 ubiquitin-protein ligase complexes. The CSN complex is involved in the regulation of the mating pheromone response. The protein is COP9 signalosome complex subunit 10 (RRI2) of Candida glabrata (strain ATCC 2001 / BCRC 20586 / JCM 3761 / NBRC 0622 / NRRL Y-65 / CBS 138) (Yeast).